The following is a 119-amino-acid chain: DNA-directed RNA polymerase subunit omega (119 aa).

It belongs to the RNA polymerase subunit omega family. The RNAP catalytic core consists of 2 alpha, 1 beta, 1 beta' and 1 omega subunit. When a sigma factor is associated with the core the holoenzyme is formed, which can initiate transcription.

It carries out the reaction RNA(n) + a ribonucleoside 5'-triphosphate = RNA(n+1) + diphosphate. Promotes RNA polymerase assembly. Latches the N- and C-terminal regions of the beta' subunit thereby facilitating its interaction with the beta and alpha subunits. This chain is DNA-directed RNA polymerase subunit omega, found in Caulobacter sp. (strain K31).